A 560-amino-acid polypeptide reads, in one-letter code: Chaperonin GroEL 2 (560 aa).

ATP contacts are provided by residues 29-32, 86-90, glycine 413, and aspartate 492; these read TIGP and DGTTT. Residues 520-542 are disordered; it reads DKPEPPSAPGAEGGDPMGGMGGM. The segment covering 530–542 has biased composition (gly residues); it reads AEGGDPMGGMGGM.

Belongs to the chaperonin (HSP60) family. Forms a cylinder of 14 subunits composed of two heptameric rings stacked back-to-back. Interacts with the co-chaperonin GroES.

It is found in the cytoplasm. The enzyme catalyses ATP + H2O + a folded polypeptide = ADP + phosphate + an unfolded polypeptide.. In terms of biological role, together with its co-chaperonin GroES, plays an essential role in assisting protein folding. The GroEL-GroES system forms a nano-cage that allows encapsulation of the non-native substrate proteins and provides a physical environment optimized to promote and accelerate protein folding. In Prochlorococcus marinus (strain NATL2A), this protein is Chaperonin GroEL 2.